Here is a 340-residue protein sequence, read N- to C-terminus: MIAARAANLQVAMKALALAVLALAYAAATARAEQCGRQAGGARCPNRLCCSRWGWCGLTDDYCKGGCQSQCRVSRDGGDDDVAAVLLTAPGGGRAGVASVVTSDQFERMLPHRDDAACPARGFYAYRAFVAAAGAFPAFAATGDADTRKREVAAFLAQTSHATSGGPYSWGYCYKEVKGATSDFCVPNARWPCAPGKAYHARGPMQIAYNYNYGAAGEAIGADLLGNPELVATDPTVAFKTALWLWMTARSPSQPSPHAVVTGQWTPTPADSAAGRAPGYGLTTNILTGGLQCAGGNGGADRVAFYKRYCDVLGVGYGPNLDCFGQAPFDGGIMSASAAK.

The signal sequence occupies residues 1-32; the sequence is MIAARAANLQVAMKALALAVLALAYAAATARA. The region spanning 33–73 is the Chitin-binding type-1 domain; that stretch reads EQCGRQAGGARCPNRLCCSRWGWCGLTDDYCKGGCQSQCRV. Intrachain disulfides connect C35–C50, C44–C56, C49–C63, C67–C71, C118–C173, C185–C193, and C293–C323.

It belongs to the glycosyl hydrolase 19 family. Chitinase class I subfamily. In terms of tissue distribution, expressed in pistils, stamens and lodicules.

It carries out the reaction Random endo-hydrolysis of N-acetyl-beta-D-glucosaminide (1-&gt;4)-beta-linkages in chitin and chitodextrins.. Hydrolyzes chitin and may play a role in defense against fungal pathogens containing chitin. This chain is Chitinase 7 (Cht7), found in Oryza sativa subsp. indica (Rice).